A 487-amino-acid chain; its full sequence is Protein DETOXIFICATION 11 (487 aa).

The next 12 helical transmembrane spans lie at 35–55 (LICF…LQII), 73–93 (FAIS…SCAL), 122–142 (LVCL…VILG), 151–171 (AGRF…LQPL), 184–204 (LLIT…LLVY), 211–231 (IGGA…LGSF), 264–284 (AAML…SGLL), 293–313 (VLSV…AIAA), 330–350 (AAHI…LMVG), 377–397 (MAPL…LSGV), 412–432 (FGAF…WVHL), and 435–455 (VGLW…LALV).

Belongs to the multi antimicrobial extrusion (MATE) (TC 2.A.66.1) family.

The protein resides in the membrane. The sequence is that of Protein DETOXIFICATION 11 from Arabidopsis thaliana (Mouse-ear cress).